A 205-amino-acid chain; its full sequence is GTP cyclohydrolase-2 (205 aa).

Residue arginine 49–glutamate 53 coordinates GTP. Cysteine 54, cysteine 65, and cysteine 67 together coordinate Zn(2+). GTP contacts are provided by residues glutamine 70, glutamate 92–arginine 94, and threonine 114. Catalysis depends on aspartate 126, which acts as the Proton acceptor. Arginine 128 serves as the catalytic Nucleophile. Threonine 149 and lysine 154 together coordinate GTP.

Belongs to the GTP cyclohydrolase II family. Zn(2+) is required as a cofactor.

It carries out the reaction GTP + 4 H2O = 2,5-diamino-6-hydroxy-4-(5-phosphoribosylamino)-pyrimidine + formate + 2 phosphate + 3 H(+). The protein operates within cofactor biosynthesis; riboflavin biosynthesis; 5-amino-6-(D-ribitylamino)uracil from GTP: step 1/4. Its function is as follows. Catalyzes the conversion of GTP to 2,5-diamino-6-ribosylamino-4(3H)-pyrimidinone 5'-phosphate (DARP), formate and pyrophosphate. The protein is GTP cyclohydrolase-2 of Pseudomonas fluorescens (strain SBW25).